Consider the following 185-residue polypeptide: Ribosome-recycling factor (185 aa).

This sequence belongs to the RRF family.

It localises to the cytoplasm. In terms of biological role, responsible for the release of ribosomes from messenger RNA at the termination of protein biosynthesis. May increase the efficiency of translation by recycling ribosomes from one round of translation to another. The polypeptide is Ribosome-recycling factor (Aliivibrio fischeri (strain MJ11) (Vibrio fischeri)).